Consider the following 82-residue polypeptide: Envelope small membrane protein (82 aa).

Residues 1-16 are Virion surface-facing; the sequence is MVDLFFNDTAWYIGQI. The chain crosses the membrane as a helical span at residues 17 to 37; that stretch reads LVLVLFCLISLIFVVAFLATI. At 38–79 the chain is on the intravirion side; it reads KLCMQLCGFCNFFIISPSAYVYKRGMQLYKSYSEQVIPPTSD.

This sequence belongs to the betacoronaviruses E protein family. In terms of assembly, homopentamer. Interacts with membrane protein M in the budding compartment of the host cell, which is located between endoplasmic reticulum and the Golgi complex. Interacts with Nucleoprotein.

The protein localises to the host Golgi apparatus membrane. Plays a central role in virus morphogenesis and assembly. Acts as a viroporin and self-assembles in host membranes forming pentameric protein-lipid pores that allow ion transport. Also plays a role in the induction of apoptosis. The protein is Envelope small membrane protein of Human coronavirus HKU1 (isolate N1) (HCoV-HKU1).